Here is a 369-residue protein sequence, read N- to C-terminus: Capsid protein (369 aa).

Its subcellular location is the host nucleus. It localises to the virion. Self-assembles to form the virion icosahedral capsid. The chain is Capsid protein from Avon-Heathcote Estuary associated kieseladnavirus (AHEaBV).